We begin with the raw amino-acid sequence, 489 residues long: Major aspartyl peptidase 1 (489 aa).

Residues 1–16 (MHYLAVALPLLTLALA) form the signal peptide. One can recognise a Peptidase A1 domain in the interval 101-432 (YAGQVSIGTP…RYNPAAIGFA (332 aa)). Residue Asp119 is part of the active site. Gly121 serves as a coordination point for pepstatin A. Residues Cys132 and Cys137 are joined by a disulfide bond. The pepstatin A site is built by Thr161, Gly163, and Ser164. Asn266 carries N-linked (GlcNAc...) asparagine glycosylation. Tyr286 provides a ligand contact to pepstatin A. Residue Asp317 is part of the active site. Pepstatin A is bound by residues Thr320 and Thr321. A disulfide bridge connects residues Cys357 and Cys391. A disordered region spans residues 442–466 (AGNPSSSTTGGGTSGSNGGGSSSGA). The segment covering 450 to 463 (TGGGTSGSNGGGSS) has biased composition (gly residues). Positions 456-489 (GSNGGGSSSGAMERKGVQLGWLVGAVAVGVAAMI) are cleaved as a propeptide — removed at pH 5.0; by autocatalysis.

It belongs to the peptidase A1 family. In terms of assembly, monomer. In terms of processing, activated by the autocatalytic cleavage of the propeptide. Cleaved at the end of the propeptide promiscuously from residue 76 to residue 79. C-terminal cleavage by autocatalysis at Gly-456 at the pH optimum indicating a possible regulatory or other function of this propeptide.

It is found in the secreted. Its activity is regulated as follows. Activated by low pH. Inhibited by pepstatin A with an IC(50) of 1.4 nM. Inhibited by acetyl pepstatin. Inhibited by HIV antiretroviral therapy protease inhibitors including amprenavir and ritonavir. Inhibited by HIV-1 protease inhibitor brecanavir with an approximate IC(50) of 352 nM. Inhibited by HIV-1 protease inhibitors CGP53437 and GS-8374. From the tested peptidomimetic inhibitor molecules, macrocycles containing P2-P3' tethered side chains, statines in P1 and an alpha amino acid in P2' are the best. From the linear peptidomimetic inhibitors, the ones with a phenylstatine or hydroxyethylamine scissile bond isoster are better than compounds with a reduced bond or a homo-amide. Overall, inhibitors with a phenylalanine side chain, either unsubstituted or with a small substituent, is preferred in P1 while a bulkier P1 side chain leads to lower inhibition. Its function is as follows. Possesses prevalent extracellular endopeptidase activity at low pH condition. Required for high-density growth in acidic environments. Broad substrate specificity with preference cleavage of the peptide substrate between hydrophobic amino acids. Cleaves substrate at P1-P1' between Phe-Leu. Positively charged amino acids are preferred at P2. Prefers hydrophobic amino acids at the P3 and P4 positions. Cleaves substrate also at P1'-P2' between Leu-Val to some degree. Required for virulence in mouse inhalation model of infection. In Cryptococcus neoformans var. grubii serotype A (strain H99 / ATCC 208821 / CBS 10515 / FGSC 9487) (Filobasidiella neoformans var. grubii), this protein is Major aspartyl peptidase 1.